A 181-amino-acid chain; its full sequence is Ribosome maturation factor RimP (181 aa).

The protein belongs to the RimP family.

The protein localises to the cytoplasm. In terms of biological role, required for maturation of 30S ribosomal subunits. In Sphingopyxis alaskensis (strain DSM 13593 / LMG 18877 / RB2256) (Sphingomonas alaskensis), this protein is Ribosome maturation factor RimP.